We begin with the raw amino-acid sequence, 460 residues long: Probable lipase C14C8.15 (460 aa).

Topologically, residues 1–16 are cytoplasmic; that stretch reads MTLNGNIMKYCLEKGE. Residues 17–37 form a helical; Signal-anchor for type II membrane protein membrane-spanning segment; it reads ILISFLLIALESMFRICTVIL. Over 38–460 the chain is Lumenal; sequence PSPLRNWFYE…LVDGVMNHTI (423 aa). Catalysis depends on serine 214, which acts as the Nucleophile. N-linked (GlcNAc...) asparagine glycosylation is present at asparagine 308. Active-site charge relay system residues include aspartate 382 and histidine 408. Asparagine 457 is a glycosylation site (N-linked (GlcNAc...) asparagine).

It belongs to the AB hydrolase superfamily. Lipase family.

It localises to the golgi apparatus. Its subcellular location is the membrane. Functionally, probable lipase. The chain is Probable lipase C14C8.15 from Schizosaccharomyces pombe (strain 972 / ATCC 24843) (Fission yeast).